The sequence spans 704 residues: Polyribonucleotide nucleotidyltransferase (704 aa).

Mg(2+) contacts are provided by Asp-485 and Asp-491. The 60-residue stretch at 552 to 611 (PRIYTMKIDPKKIKDVIGKGGATIRALTEETGTSIDIDDDGTVKIAAVDGNAVKTVMARI) folds into the KH domain. The S1 motif domain occupies 621 to 689 (GAVYTGKVTR…RQGRIRLTMR (69 aa)).

Belongs to the polyribonucleotide nucleotidyltransferase family. In terms of assembly, component of the RNA degradosome, which is a multiprotein complex involved in RNA processing and mRNA degradation. Mg(2+) is required as a cofactor.

Its subcellular location is the cytoplasm. It catalyses the reaction RNA(n+1) + phosphate = RNA(n) + a ribonucleoside 5'-diphosphate. Its function is as follows. Involved in mRNA degradation. Catalyzes the phosphorolysis of single-stranded polyribonucleotides processively in the 3'- to 5'-direction. This Mannheimia succiniciproducens (strain KCTC 0769BP / MBEL55E) protein is Polyribonucleotide nucleotidyltransferase.